We begin with the raw amino-acid sequence, 569 residues long: Probable pyruvate decarboxylase Pdc101 (569 aa).

Asp-33 and His-120 together coordinate substrate. The residue at position 233 (Ser-233) is a Phosphoserine. Residues 396–478 (DSWFNGLQMK…FLLNNRGYTI (83 aa)) form a thiamine pyrophosphate binding region. Mg(2+) is bound by residues Asp-446, Asn-473, and Gly-475. Residue Glu-479 participates in substrate binding. The residue at position 521 (Thr-521) is a Phosphothreonine. At Ser-522 the chain carries Phosphoserine.

Belongs to the TPP enzyme family. Homotetramer. Requires a metal cation as cofactor. It depends on thiamine diphosphate as a cofactor.

The catalysed reaction is a 2-oxocarboxylate + H(+) = an aldehyde + CO2. This Schizosaccharomyces pombe (strain 972 / ATCC 24843) (Fission yeast) protein is Probable pyruvate decarboxylase Pdc101 (pdc101).